Consider the following 309-residue polypeptide: NmrA-like family domain-containing protein 1 (309 aa).

NADP(+)-binding positions include 11–16 (GATGAQ), 37–41 (RNPEQ), 58–59 (DQ), 79–81 (TNY), lysine 102, lysine 143, and 165–168 (YFEN). The tract at residues 163–199 (PCYFENLLSYFLPQKAADGKSFLLDLPMGDVPMDGMS) is interaction with ASS1.

This sequence belongs to the NmrA-type oxidoreductase family. In terms of assembly, homodimer. Interacts with ASS1. Interaction is enhanced by low NADPH/NADP(+) ratios, which results in inhibition of ASS1 activity.

Its subcellular location is the cytoplasm. It localises to the perinuclear region. It is found in the nucleus. Functionally, redox sensor protein. Undergoes restructuring and subcellular redistribution in response to changes in intracellular NADPH/NADP(+) levels. At low NADPH concentrations the protein is found mainly as a monomer, and binds argininosuccinate synthase (ASS1), the enzyme involved in nitric oxide synthesis. Association with ASS1 impairs its activity and reduces the production of nitric oxide, which subsecuently prevents apoptosis. Under normal NADPH concentrations, the protein is found as a dimer and hides the binding site for ASS1. The homodimer binds one molecule of NADPH. Has higher affinity for NADPH than for NADP(+). Binding to NADPH is necessary to form a stable dimer. The polypeptide is NmrA-like family domain-containing protein 1 (Nmral1) (Mus musculus (Mouse)).